The chain runs to 127 residues: Large ribosomal subunit protein mL55 (127 aa).

The N-terminal 32 residues, 1-32, are a transit peptide targeting the mitochondrion; it reads MPLAILLSLLRHCGVRAALPTPRHLHTSPWRA. Ser-84 carries the post-translational modification Phosphoserine.

It belongs to the mitochondrion-specific ribosomal protein mL55 family. As to quaternary structure, component of the mitochondrial ribosome large subunit (39S) which comprises a 16S rRNA and about 50 distinct proteins.

It is found in the mitochondrion. This Mus musculus (Mouse) protein is Large ribosomal subunit protein mL55 (Mrpl55).